Here is a 464-residue protein sequence, read N- to C-terminus: ATP synthase subunit beta (464 aa).

An ATP-binding site is contributed by 154-161 (GGAGVGKT).

Belongs to the ATPase alpha/beta chains family. F-type ATPases have 2 components, CF(1) - the catalytic core - and CF(0) - the membrane proton channel. CF(1) has five subunits: alpha(3), beta(3), gamma(1), delta(1), epsilon(1). CF(0) has three main subunits: a(1), b(2) and c(9-12). The alpha and beta chains form an alternating ring which encloses part of the gamma chain. CF(1) is attached to CF(0) by a central stalk formed by the gamma and epsilon chains, while a peripheral stalk is formed by the delta and b chains.

Its subcellular location is the cell inner membrane. The enzyme catalyses ATP + H2O + 4 H(+)(in) = ADP + phosphate + 5 H(+)(out). Produces ATP from ADP in the presence of a proton gradient across the membrane. The catalytic sites are hosted primarily by the beta subunits. This Blochmanniella floridana protein is ATP synthase subunit beta.